An 86-amino-acid chain; its full sequence is Large ribosomal subunit protein bL27 (86 aa).

A compositionally biased stretch (gly residues) spans 1–10 (MAQKKGGGST). Residues 1-21 (MAQKKGGGSTRNGRDSESKRL) are disordered.

It belongs to the bacterial ribosomal protein bL27 family.

In Ralstonia pickettii (strain 12J), this protein is Large ribosomal subunit protein bL27.